The sequence spans 255 residues: Glutamate racemase (255 aa).

Residues D7 to S8 and Y39 to G40 contribute to the substrate site. C70 serves as the catalytic Proton donor/acceptor. A substrate-binding site is contributed by N71–T72. C181 (proton donor/acceptor) is an active-site residue. Residue T182 to H183 participates in substrate binding.

It belongs to the aspartate/glutamate racemases family.

The enzyme catalyses L-glutamate = D-glutamate. Its pathway is cell wall biogenesis; peptidoglycan biosynthesis. Its function is as follows. Provides the (R)-glutamate required for cell wall biosynthesis. This is Glutamate racemase from Helicobacter pylori (strain Shi470).